A 240-amino-acid polypeptide reads, in one-letter code: Peptidyl-tRNA hydrolase (240 aa).

Tyr14 lines the tRNA pocket. His19 acts as the Proton acceptor in catalysis. 3 residues coordinate tRNA: Phe64, Asn66, and Asn112. The interval 196 to 227 (EKPAQKQQPKQQSHIRQARSQQAPAKLPETGP) is disordered. The segment covering 209-218 (HIRQARSQQA) has biased composition (polar residues).

It belongs to the PTH family. As to quaternary structure, monomer.

The protein localises to the cytoplasm. It carries out the reaction an N-acyl-L-alpha-aminoacyl-tRNA + H2O = an N-acyl-L-amino acid + a tRNA + H(+). Its function is as follows. Hydrolyzes ribosome-free peptidyl-tRNAs (with 1 or more amino acids incorporated), which drop off the ribosome during protein synthesis, or as a result of ribosome stalling. Catalyzes the release of premature peptidyl moieties from peptidyl-tRNA molecules trapped in stalled 50S ribosomal subunits, and thus maintains levels of free tRNAs and 50S ribosomes. This Mesorhizobium japonicum (strain LMG 29417 / CECT 9101 / MAFF 303099) (Mesorhizobium loti (strain MAFF 303099)) protein is Peptidyl-tRNA hydrolase.